We begin with the raw amino-acid sequence, 181 residues long: NADH-quinone oxidoreductase subunit B (181 aa).

4 residues coordinate [4Fe-4S] cluster: cysteine 45, cysteine 46, cysteine 111, and cysteine 140.

Belongs to the complex I 20 kDa subunit family. NDH-1 is composed of 14 different subunits. Subunits NuoB, C, D, E, F, and G constitute the peripheral sector of the complex. It depends on [4Fe-4S] cluster as a cofactor.

It is found in the cell inner membrane. The enzyme catalyses a quinone + NADH + 5 H(+)(in) = a quinol + NAD(+) + 4 H(+)(out). Its function is as follows. NDH-1 shuttles electrons from NADH, via FMN and iron-sulfur (Fe-S) centers, to quinones in the respiratory chain. The immediate electron acceptor for the enzyme in this species is believed to be a menaquinone. Couples the redox reaction to proton translocation (for every two electrons transferred, four hydrogen ions are translocated across the cytoplasmic membrane), and thus conserves the redox energy in a proton gradient. The chain is NADH-quinone oxidoreductase subunit B from Flavobacterium psychrophilum (strain ATCC 49511 / DSM 21280 / CIP 103535 / JIP02/86).